We begin with the raw amino-acid sequence, 312 residues long: Olfactory receptor 10C1 (312 aa).

The Extracellular portion of the chain corresponds to 1–24; the sequence is MSANTSMVTEFLLLGFSHLADLQG. N4 is a glycosylation site (N-linked (GlcNAc...) asparagine). A helical membrane pass occupies residues 25–45; the sequence is LLFSVFLTIYLLTVAGNFLIV. Residues 46-53 lie on the Cytoplasmic side of the membrane; sequence VLVSTDAA. A helical membrane pass occupies residues 54–74; sequence LQSPMYFFLRTLSALEIGYTS. Over 75–98 the chain is Extracellular; sequence VTVPLLLHHLLTGRRHISRSGCAL. Residues C96 and C188 are joined by a disulfide bond. The helical transmembrane segment at 99–119 threads the bilayer; sequence QMFFFLFFGATECCLLAAMAY. The Cytoplasmic portion of the chain corresponds to 120–138; that stretch reads DRYAAICEPLRYPLLLSHR. The chain crosses the membrane as a helical span at residues 139–159; it reads VCLQLAGSAWACGVLVGLGHT. Over 160–196 the chain is Extracellular; the sequence is PFIFSLPFCGPNTIPQFFCEIQPVLQLVCGDTSLNEL. A helical transmembrane segment spans residues 197-216; the sequence is QIILATALLILCPFGLILGS. Residues 217 to 236 lie on the Cytoplasmic side of the membrane; that stretch reads YGRILVTIFRIPSVAGRRKA. Residues 237–257 form a helical membrane-spanning segment; that stretch reads FSTCSSHLIMVSLFYGTALFI. Residues 258 to 270 are Extracellular-facing; sequence YIRPKASYDPATD. A helical transmembrane segment spans residues 271–291; that stretch reads PLVSLFYAVVTPILNPIIYSL. The Cytoplasmic segment spans residues 292 to 312; sequence RNTEVKAALKRTIQKTVPMEI.

The protein belongs to the G-protein coupled receptor 1 family.

It is found in the cell membrane. Odorant receptor. In Homo sapiens (Human), this protein is Olfactory receptor 10C1 (OR10C1).